The following is a 564-amino-acid chain: Beta-catenin-like protein 1 homolog (564 aa).

The disordered stretch occupies residues 1–56 (MDVDSIFKNTEETNKKRNPEEADSLEPASSRRRLAEENSDEENEEFDEEGGRFFGS). Residues 9–20 (NTEETNKKRNPE) show a composition bias toward basic and acidic residues. The segment covering 37 to 48 (ENSDEENEEFDE) has biased composition (acidic residues). S39 carries the phosphoserine modification. 2 HEAT repeats span residues 83–133 (PTEL…VLSE) and 138–177 (IPIF…DEDV). ARM repeat units follow at residues 179-229 (PDAL…LLSV), 230-276 (DNSI…LANS), 277-326 (KEAK…LVQE), 328-366 (KGKS…LLFG), and 367-411 (PLST…LFRS). Residues 465-528 (EKSTKWFLQQ…DALKNYHENL (64 aa)) are a coiled coil.

The protein localises to the nucleus. In terms of biological role, probable spliceosomal component involved in the activation of pre-mRNA splicing. This is Beta-catenin-like protein 1 homolog (ctnnbl1) from Schizosaccharomyces pombe (strain 972 / ATCC 24843) (Fission yeast).